Here is a 1057-residue protein sequence, read N- to C-terminus: Nuclear RNAi defective-3 protein (1057 aa).

2 disordered regions span residues 1 to 89 and 344 to 388; these read MDLL…GLSV and LTNS…ERTV. Over residues 17–30 the composition is skewed to low complexity; sequence STAKKPATSASSTP. Composition is skewed to basic and acidic residues over residues 67 to 81 and 356 to 388; these read PKRE…DPKR and GGRE…ERTV. One can recognise a PAZ domain in the interval 387–500; the sequence is TVSHYQRQFQ…YPMELMSILP (114 aa). The region spanning 677–1001 is the Piwi domain; that stretch reads GIIAEKRPDM…LAKRGHNNYK (325 aa).

The protein resides in the cytoplasm. It localises to the nucleus. Transports small interfering RNAs (siRNAs) from the cytoplasm to the nucleus. Required for RNA interference (RNAi) in nuclei. Required for exogenous RNAi-induced H3K27 methylation. This is Nuclear RNAi defective-3 protein (nrde-3) from Caenorhabditis elegans.